The primary structure comprises 495 residues: UDP-N-acetylmuramate--L-alanine ligase (495 aa).

120-126 contributes to the ATP binding site; that stretch reads GSHGKTT.

This sequence belongs to the MurCDEF family.

It is found in the cytoplasm. It carries out the reaction UDP-N-acetyl-alpha-D-muramate + L-alanine + ATP = UDP-N-acetyl-alpha-D-muramoyl-L-alanine + ADP + phosphate + H(+). It functions in the pathway cell wall biogenesis; peptidoglycan biosynthesis. In terms of biological role, cell wall formation. This chain is UDP-N-acetylmuramate--L-alanine ligase, found in Rickettsia prowazekii (strain Madrid E).